The following is a 159-amino-acid chain: SsrA-binding protein (159 aa).

The disordered stretch occupies residues 132–159; it reads KDFDKRHTEKERDSDREIQRAMRHGKDD.

Belongs to the SmpB family.

The protein resides in the cytoplasm. In terms of biological role, required for rescue of stalled ribosomes mediated by trans-translation. Binds to transfer-messenger RNA (tmRNA), required for stable association of tmRNA with ribosomes. tmRNA and SmpB together mimic tRNA shape, replacing the anticodon stem-loop with SmpB. tmRNA is encoded by the ssrA gene; the 2 termini fold to resemble tRNA(Ala) and it encodes a 'tag peptide', a short internal open reading frame. During trans-translation Ala-aminoacylated tmRNA acts like a tRNA, entering the A-site of stalled ribosomes, displacing the stalled mRNA. The ribosome then switches to translate the ORF on the tmRNA; the nascent peptide is terminated with the 'tag peptide' encoded by the tmRNA and targeted for degradation. The ribosome is freed to recommence translation, which seems to be the essential function of trans-translation. This Pseudomonas aeruginosa (strain LESB58) protein is SsrA-binding protein.